We begin with the raw amino-acid sequence, 606 residues long: Zinc finger protein 214 (606 aa).

Residues 3–83 (VTFEDVTIIF…GAQMYENQNY (81 aa)) form the KRAB domain. A C2H2-type 1; degenerate zinc finger spans residues 275–297 (YGCDEVDGNFHQSSGVHFHQRVH). A C2H2-type 2 zinc finger spans residues 303–325 (YSCNACGKSFSQISSLHNHQRVH). The segment at 330–352 (FYKIECDKDLSRNSLLHIHQRLH) adopts a C2H2-type 3; degenerate zinc-finger fold. 8 consecutive C2H2-type zinc fingers follow at residues 358-380 (FKCN…QRVH), 386-408 (YKCD…QLVH), 414-436 (YKCE…QRVH), 442-464 (YKCD…QRVH), 470-492 (YTCP…QRVH), 498-520 (YKCE…QRVH), 526-548 (YKCH…QRVH), and 554-576 (YQCA…QRVH).

This sequence belongs to the krueppel C2H2-type zinc-finger protein family.

It localises to the nucleus. Its function is as follows. May be involved in transcriptional regulation. This Homo sapiens (Human) protein is Zinc finger protein 214 (ZNF214).